Reading from the N-terminus, the 112-residue chain is Putative pterin-4-alpha-carbinolamine dehydratase (112 aa).

Belongs to the pterin-4-alpha-carbinolamine dehydratase family.

The enzyme catalyses (4aS,6R)-4a-hydroxy-L-erythro-5,6,7,8-tetrahydrobiopterin = (6R)-L-erythro-6,7-dihydrobiopterin + H2O. In Shewanella loihica (strain ATCC BAA-1088 / PV-4), this protein is Putative pterin-4-alpha-carbinolamine dehydratase.